The sequence spans 64 residues: AKACTPLLHDCSHDRHSCCRGDMFKYVCDCFYPEGEDKTEVCSCQQPKSHKIAEKIIDKAKTTL.

The segment at 1-44 is knottin domain; sequence AKACTPLLHDCSHDRHSCCRGDMFKYVCDCFYPEGEDKTEVCSC. 4 cysteine pairs are disulfide-bonded: Cys4–Cys19, Cys11–Cys28, Cys18–Cys44, and Cys30–Cys42. Residues 45-64 form a linear cationic cytotoxin domain region; that stretch reads QQPKSHKIAEKIIDKAKTTL. Leu64 carries the leucine amide modification.

This sequence belongs to the neurotoxin 19 (CSTX) family. 05 (U4-Lctx) subfamily. Post-translationally, amidation at Leu-64 is not mandatory for activity on P2RX3. Expressed by the venom gland.

The protein resides in the secreted. Enhances the high-affinity desensitization of human P2RX3 purinoceptors. At 50 nM, the toxin decreases the IC(50) for ambient ATP from 2.67 nM to 0.77 nM in human P2RX3. The polypeptide is Purotoxin-2 (Alopecosa marikovskyi (Wolf spider)).